We begin with the raw amino-acid sequence, 148 residues long: Large ribosomal subunit protein uL13 (148 aa).

Composition is skewed to basic and acidic residues over residues 71 to 81 and 89 to 99; these read GKKEKQKEYHE and DHSHSPEEMRA. Disordered stretches follow at residues 71–99 and 125–148; these read GKKE…EMRA and KKLK…LDNA.

The protein belongs to the universal ribosomal protein uL13 family. Part of the 50S ribosomal subunit.

In terms of biological role, this protein is one of the early assembly proteins of the 50S ribosomal subunit, although it is not seen to bind rRNA by itself. It is important during the early stages of 50S assembly. The chain is Large ribosomal subunit protein uL13 from Salinibacter ruber (strain DSM 13855 / M31).